The following is a 295-amino-acid chain: MAVFSSLTPVFVAVLCVIIGFLFKNSQRKESRSKQKPSDQTARPWVDEDLQDDTEISTKDNEENNEDWMDTTDEENLPHVPYSPVQYSVSEMLDRSERFYTLMNLRRSVRFISPEPVPKEVIDNVIRTAGTAPSGAHTEPWTFVVVSDTDVKHRIREIIEEEEEINYKQRMGNKWVQDLKRLRTNWVKEYLDVAPYLILVFKQAYGILPSGKKKTHYYNEISVSISCGILLAALQNAGLVTVTTTPLNCGPQLRSLLQRPANEKLLMLLPVGFPASDAKVPDLKRKDLNDIMVLV.

The chain crosses the membrane as a helical span at residues 3 to 23 (VFSSLTPVFVAVLCVIIGFLF). The interval 29–81 (KESRSKQKPSDQTARPWVDEDLQDDTEISTKDNEENNEDWMDTTDEENLPHVP) is disordered. Acidic residues predominate over residues 63 to 75 (ENNEDWMDTTDEE). FMN is bound by residues 106 to 110 (RRSVR), Ser134, and 134 to 135 (SG). Positions 136, 163, 167, and 188 each coordinate 3-iodo-L-tyrosine. FMN-binding positions include 243–245 (TTT) and Arg285.

Belongs to the nitroreductase family. The cofactor is FMN.

Its subcellular location is the membrane. It carries out the reaction 2 iodide + L-tyrosine + 2 NADP(+) = 3,5-diiodo-L-tyrosine + 2 NADPH + H(+). It catalyses the reaction iodide + L-tyrosine + NADP(+) = 3-iodo-L-tyrosine + NADPH. The catalysed reaction is 3-iodo-L-tyrosine + iodide + NADP(+) = 3,5-diiodo-L-tyrosine + NADPH + H(+). The enzyme catalyses L-tyrosine + chloride + NADP(+) = 3-chloro-L-tyrosine + NADPH. It carries out the reaction bromide + L-tyrosine + NADP(+) = 3-bromo-L-tyrosine + NADPH. In terms of biological role, catalyzes the dehalogenation of halotyrosines such as 3,5-diiodo-L-tyrosine. Likely to also catalyze the dehalogenation of other halotyrosines such as 3-bromo-L-tyrosine, 3-chloro-L-tyrosine and 3-iodo-L-tyrosine. This is Iodotyrosine deiodinase (iyd) from Danio rerio (Zebrafish).